A 296-amino-acid chain; its full sequence is Cytidine deaminase (296 aa).

2 CMP/dCMP-type deaminase domains span residues 47-167 and 186-296; these read TEAE…FGPK and DSSD…VDPV. 88-90 contributes to the substrate binding site; that stretch reads NLE. A Zn(2+)-binding site is contributed by His-101. Glu-103 serves as the catalytic Proton donor. Zn(2+) is bound by residues Cys-128 and Cys-131.

The protein belongs to the cytidine and deoxycytidylate deaminase family. Homodimer. Zn(2+) serves as cofactor.

The enzyme catalyses cytidine + H2O + H(+) = uridine + NH4(+). It catalyses the reaction 2'-deoxycytidine + H2O + H(+) = 2'-deoxyuridine + NH4(+). In terms of biological role, this enzyme scavenges exogenous and endogenous cytidine and 2'-deoxycytidine for UMP synthesis. The chain is Cytidine deaminase from Shewanella sp. (strain MR-4).